The sequence spans 39 residues: Photosystem II reaction center protein L (39 aa).

A helical membrane pass occupies residues 18-38; it reads SLYLGLLLVFVTGVLFSSYFF.

Belongs to the PsbL family. As to quaternary structure, PSII is composed of 1 copy each of membrane proteins PsbA, PsbB, PsbC, PsbD, PsbE, PsbF, PsbH, PsbI, PsbJ, PsbK, PsbL, PsbM, PsbT, PsbX, PsbY, PsbZ, Psb30/Ycf12, at least 3 peripheral proteins of the oxygen-evolving complex and a large number of cofactors. It forms dimeric complexes.

Its subcellular location is the plastid. The protein resides in the organellar chromatophore thylakoid membrane. Functionally, one of the components of the core complex of photosystem II (PSII). PSII is a light-driven water:plastoquinone oxidoreductase that uses light energy to abstract electrons from H(2)O, generating O(2) and a proton gradient subsequently used for ATP formation. It consists of a core antenna complex that captures photons, and an electron transfer chain that converts photonic excitation into a charge separation. This subunit is found at the monomer-monomer interface and is required for correct PSII assembly and/or dimerization. The protein is Photosystem II reaction center protein L of Paulinella chromatophora.